The chain runs to 305 residues: Tyrosine recombinase XerC (305 aa).

Residues 4 to 95 (TSIQELINKW…AVKNFYKFLE (92 aa)) enclose the Core-binding (CB) domain. Positions 116 to 298 (LLPKSLSEDD…SIKHLVSVYT (183 aa)) constitute a Tyr recombinase domain. Active-site residues include Arg159, Lys182, His250, Arg253, and His276. Tyr285 serves as the catalytic O-(3'-phospho-DNA)-tyrosine intermediate.

Belongs to the 'phage' integrase family. XerC subfamily. Forms a cyclic heterotetrameric complex composed of two molecules of XerC and two molecules of XerD.

Its subcellular location is the cytoplasm. Its function is as follows. Site-specific tyrosine recombinase, which acts by catalyzing the cutting and rejoining of the recombining DNA molecules. The XerC-XerD complex is essential to convert dimers of the bacterial chromosome into monomers to permit their segregation at cell division. It also contributes to the segregational stability of plasmids. The polypeptide is Tyrosine recombinase XerC (Rickettsia canadensis (strain McKiel)).